The following is a 395-amino-acid chain: 1-deoxy-D-xylulose 5-phosphate reductoisomerase (395 aa).

NADPH contacts are provided by Thr10, Gly11, Ser12, Ile13, Arg37, Gln38, and Asn124. Position 125 (Lys125) interacts with 1-deoxy-D-xylulose 5-phosphate. Residue Glu126 coordinates NADPH. Asp150 is a Mn(2+) binding site. 1-deoxy-D-xylulose 5-phosphate contacts are provided by Ser151, Glu152, Ser179, and His202. Position 152 (Glu152) interacts with Mn(2+). Position 208 (Gly208) interacts with NADPH. Residues Ser215, Asn220, Lys221, and Glu224 each contribute to the 1-deoxy-D-xylulose 5-phosphate site. Position 224 (Glu224) interacts with Mn(2+).

Belongs to the DXR family. Mg(2+) is required as a cofactor. The cofactor is Mn(2+).

The enzyme catalyses 2-C-methyl-D-erythritol 4-phosphate + NADP(+) = 1-deoxy-D-xylulose 5-phosphate + NADPH + H(+). It functions in the pathway isoprenoid biosynthesis; isopentenyl diphosphate biosynthesis via DXP pathway; isopentenyl diphosphate from 1-deoxy-D-xylulose 5-phosphate: step 1/6. In terms of biological role, catalyzes the NADPH-dependent rearrangement and reduction of 1-deoxy-D-xylulose-5-phosphate (DXP) to 2-C-methyl-D-erythritol 4-phosphate (MEP). The sequence is that of 1-deoxy-D-xylulose 5-phosphate reductoisomerase from Cupriavidus pinatubonensis (strain JMP 134 / LMG 1197) (Cupriavidus necator (strain JMP 134)).